The primary structure comprises 197 residues: Probable nicotinate-nucleotide adenylyltransferase (197 aa).

This sequence belongs to the NadD family.

It catalyses the reaction nicotinate beta-D-ribonucleotide + ATP + H(+) = deamido-NAD(+) + diphosphate. It participates in cofactor biosynthesis; NAD(+) biosynthesis; deamido-NAD(+) from nicotinate D-ribonucleotide: step 1/1. Its function is as follows. Catalyzes the reversible adenylation of nicotinate mononucleotide (NaMN) to nicotinic acid adenine dinucleotide (NaAD). The protein is Probable nicotinate-nucleotide adenylyltransferase of Pseudothermotoga lettingae (strain ATCC BAA-301 / DSM 14385 / NBRC 107922 / TMO) (Thermotoga lettingae).